A 209-amino-acid polypeptide reads, in one-letter code: E3 ubiquitin-protein ligase RNF138 (209 aa).

An RING-type zinc finger spans residues 18 to 58; the sequence is CPVCQEVLKTPVRTAACQHVFCRKCFLTAMRESGIHCPLCR. The Zn(2+) site is built by C86, C89, H101, and C105. A C2HC RNF-type zinc finger spans residues 86 to 105; it reads CRCCSKKIKFYRMRHHYKSC. Positions 125–154 are disordered; it reads QDSVRSSNRSETSASDNTETYQEDTSSSGH. Phosphothreonine is present on T142. The segment at 157 to 180 adopts a C2H2-type zinc-finger fold; it reads FKCPLCQESNFTRQRLLDHCNSNH. In terms of domain architecture, UIM spans 189-207; it reads LQLDEETQYQTAVEESFQV.

As to quaternary structure, interacts with NLK. Interacts with XRCC5/Ku80. Interacts with RBBP8/CtIP. In terms of processing, auto-ubiquitinated.

Its subcellular location is the chromosome. It catalyses the reaction S-ubiquitinyl-[E2 ubiquitin-conjugating enzyme]-L-cysteine + [acceptor protein]-L-lysine = [E2 ubiquitin-conjugating enzyme]-L-cysteine + N(6)-ubiquitinyl-[acceptor protein]-L-lysine.. Its pathway is protein modification; protein ubiquitination. In terms of biological role, E3 ubiquitin-protein ligase involved in DNA damage response by promoting DNA resection and homologous recombination. Recruited to sites of double-strand breaks following DNA damage and specifically promotes double-strand break repair via homologous recombination. Two different, non-exclusive, mechanisms have been proposed. According to a report, regulates the choice of double-strand break repair by favoring homologous recombination over non-homologous end joining (NHEJ): acts by mediating ubiquitination of XRCC5/Ku80, leading to remove the Ku complex from DNA breaks, thereby promoting homologous recombination. According to another report, cooperates with UBE2Ds E2 ubiquitin ligases (UBE2D1, UBE2D2, UBE2D3 or UBE2D4) to promote homologous recombination by mediating ubiquitination of RBBP8/CtIP. Together with NLK, involved in the ubiquitination and degradation of TCF/LEF. Also exhibits auto-ubiquitination activity in combination with UBE2K. May act as a negative regulator in the Wnt/beta-catenin-mediated signaling pathway. The protein is E3 ubiquitin-protein ligase RNF138 of Rattus norvegicus (Rat).